A 276-amino-acid polypeptide reads, in one-letter code: SRR1-like protein (276 aa).

S30 carries the post-translational modification Phosphoserine. Residue Y34 is modified to Phosphotyrosine.

This sequence belongs to the SRR1 family.

Its function is as follows. Possible regulator involved in a circadian clock input pathway. The chain is SRR1-like protein from Drosophila melanogaster (Fruit fly).